The sequence spans 247 residues: Protein lin-28 homolog B (247 aa).

The segment at 1–22 (MAEGGASKGEEPEKLPGLAEDE) is disordered. The 74-residue stretch at 27–100 (HGTGHCKWFN…GLESIRVTGP (74 aa)) folds into the CSD domain. S94, S103, and S108 each carry phosphoserine. The tract at residues 96–124 (RVTGPGGSPCLGSERRPKGKTLQKRKPKG) is disordered. Positions 112-123 (PKGKTLQKRKPK) are enriched in basic residues. 2 consecutive CCHC-type zinc fingers follow at residues 125-142 (DRCY…ECSL) and 147-164 (KKCH…NCPH). Zn(2+)-binding residues include C127, C130, H135, C140, C149, C152, H157, and C162. Residues 173-186 (SSQGRQEAESQPCS) are compositionally biased toward polar residues. Positions 173–247 (SSQGRQEAES…GPLIQKRKKT (75 aa)) are disordered. Residues 207–219 (VKSEMAEHSDRSP) show a composition bias toward basic and acidic residues.

The protein belongs to the lin-28 family.

Its subcellular location is the nucleus. The protein resides in the nucleolus. Its function is as follows. Suppressor of microRNA (miRNA) biogenesis, including that of let-7 and possibly of miR107, miR-143 and miR-200c. Binds primary let-7 transcripts (pri-let-7), including pri-let-7g and pri-let-7a-1, and sequester them in the nucleolus, away from the microprocessor complex, hence preventing their processing into mature miRNA. Does not act on pri-miR21. The repression of let-7 expression is required for normal development and contributes to maintain the pluripotent state of embryonic stem cells by preventing let-7-mediated differentiation. When overexpressed, recruits ZCCHC11/TUT4 uridylyltransferase to pre-let-7 transcripts, leading to their terminal uridylation and degradation. This activity might not be relevant in vivo, as LIN28B-mediated inhibition of let-7 miRNA maturation appears to be ZCCHC11-independent. Interaction with target pre-miRNAs occurs via an 5'-GGAG-3' motif in the pre-miRNA terminal loop. Mediates MYC-induced let-7 repression. When overexpressed, may stimulate growth of carcinoma cell lines. The chain is Protein lin-28 homolog B (Lin28b) from Mus musculus (Mouse).